We begin with the raw amino-acid sequence, 156 residues long: Translation initiation factor IF-1, chloroplastic (156 aa).

A disordered region spans residues Met-1–Gln-35. The transit peptide at Met-1–Ser-49 directs the protein to the chloroplast. Residues Ser-10–Pro-20 show a composition bias toward low complexity. The S1-like domain occupies Gly-72–Arg-148.

This sequence belongs to the IF-1 family. As to quaternary structure, component of the 30S ribosomal translation pre-initiation complex which assembles on the 30S ribosome in the order IF-2 and IF-3, IF-1 and N-formylmethionyl-tRNA(fMet); mRNA recruitment can occur at any time during PIC assembly.

It is found in the plastid. It localises to the chloroplast. Its function is as follows. One of the essential components for the initiation of protein synthesis. Stabilizes the binding of IF-2 and IF-3 on the 30S subunit to which N-formylmethionyl-tRNA(fMet) subsequently binds. Helps modulate mRNA selection, yielding the 30S pre-initiation complex (PIC). Upon addition of the 50S ribosomal subunit IF-1, IF-2 and IF-3 are released leaving the mature 70S translation initiation complex. This is Translation initiation factor IF-1, chloroplastic (infA) from Mesembryanthemum crystallinum (Common ice plant).